The sequence spans 314 residues: tRNA pseudouridine synthase B (314 aa).

His-43 is a substrate binding site. Residue Asp-48 is the Nucleophile of the active site. The substrate site is built by Tyr-76, Tyr-179, and Leu-200.

It belongs to the pseudouridine synthase TruB family. Type 1 subfamily.

It catalyses the reaction uridine(55) in tRNA = pseudouridine(55) in tRNA. Responsible for synthesis of pseudouridine from uracil-55 in the psi GC loop of transfer RNAs. In Salmonella paratyphi A (strain ATCC 9150 / SARB42), this protein is tRNA pseudouridine synthase B.